The sequence spans 125 residues: Protein ApaG (125 aa).

An ApaG domain is found at 1–125; sequence MIEQPRICVQ…FRLAIPALIH (125 aa).

In Yersinia pseudotuberculosis serotype IB (strain PB1/+), this protein is Protein ApaG.